A 582-amino-acid polypeptide reads, in one-letter code: uncharacterized protein (582 aa).

Helical transmembrane passes span 17–37, 57–77, 131–151, 156–176, 239–259, and 271–291; these read VAML…LPTV, LGAV…GAVY, MTAT…IMAI, ALTW…YWII, ALML…LIWF, and VGSL…VLMA. In terms of domain architecture, ABC transmembrane type-1 spans 17–300; the sequence is VAMLMMLQLV…ATMTLAVLPR (284 aa). The region spanning 335–571 is the ABC transporter domain; it reads VRLAGATFTY…CPTYAEFAAS (237 aa). 369–376 contributes to the ATP binding site; it reads GSTGSGKS.

It belongs to the ABC transporter superfamily.

The protein resides in the cell membrane. This is an uncharacterized protein from Mycobacterium tuberculosis (strain CDC 1551 / Oshkosh).